A 276-amino-acid polypeptide reads, in one-letter code: MLPEKVVKILEEMKNEKIRGASWMAKKGAEAFILLSEELDETSLEEGIIELKREILEINPSMASLYNLAMFIPITNDREVVKLRAEEFIKRAEEAKKEIASIGAQLIDSGDVIITHSYSSAVFEILKTAKRRGKQFKVILTESAPDYEGLYLAKALQDESIEVEIITDAQLGLFAKDATLAIVGADTVTKDGYVVNKAGTYLLAISCYESEVPFYVAAETYKFHQKITSKEVELVERPLYREGSRVRNVLFDITPWKFIRGIITELGIILPPRDMI.

This sequence belongs to the eIF-2B alpha/beta/delta subunits family. In terms of assembly, complex of two different subunits.

In terms of biological role, catalyzes the exchange of initiation factor 2-bound GDP for GTP. The chain is Putative translation initiation factor eIF-2B subunit 2-like from Pyrococcus furiosus (strain ATCC 43587 / DSM 3638 / JCM 8422 / Vc1).